The primary structure comprises 343 residues: F17c-G fimbrial adhesin (343 aa).

A signal peptide spans 1–22 (MTNFYKVFLAVFILVCCNISHA). Positions 23–199 (AVSFIGSTEN…LNPFTLNDTV (177 aa)) are receptor-binding lectin domain. A carbohydrate-binding positions include 65-66 (AN), 110-111 (DT), and 138-141 (STQG). A disulfide bond links Cys75 and Cys132. The fimbrillin-binding domain stretch occupies residues 200–343 (TSCRLLTPSA…GISTFTFSYQ (144 aa)). The tract at residues 287–307 (LKFGPDSPVKGNENQWQLSTG) is disordered. The span at 298–307 (NENQWQLSTG) shows a compositional bias: polar residues.

Belongs to the fimbrial protein family.

Its subcellular location is the fimbrium. Essential fimbrial adhesion factor that mediates binding to N-acetylglucosamine-containing receptors in the host intestinal microvilli, leading to colonization of the intestinal tissue, and diarrhea or septicemia. Also confers adhesiveness to laminin and basement membranes. The polypeptide is F17c-G fimbrial adhesin (f17cG) (Escherichia coli).